The primary structure comprises 119 residues: Large ribosomal subunit protein uL24 (119 aa).

Belongs to the universal ribosomal protein uL24 family. Part of the 50S ribosomal subunit.

Its function is as follows. One of two assembly initiator proteins, it binds directly to the 5'-end of the 23S rRNA, where it nucleates assembly of the 50S subunit. One of the proteins that surrounds the polypeptide exit tunnel on the outside of the subunit. In Arthrobacter sp. (strain FB24), this protein is Large ribosomal subunit protein uL24.